We begin with the raw amino-acid sequence, 193 residues long: Holliday junction branch migration complex subunit RuvA (193 aa).

The segment at 1–64 is domain I; the sequence is MIGRIAGVLL…EDAHLLYGFG (64 aa). Residues 65 to 139 form a domain II region; it reads TAEERSTFRE…GKIGADLGAM (75 aa). The flexible linker stretch occupies residues 139–143; it reads MAGAA. The segment at 144 to 193 is domain III; sequence SASDHASDILNALLALGYSEKEALTAVKNVPAGTGVSEGIKLALKALSKG.

This sequence belongs to the RuvA family. In terms of assembly, homotetramer. Forms an RuvA(8)-RuvB(12)-Holliday junction (HJ) complex. HJ DNA is sandwiched between 2 RuvA tetramers; dsDNA enters through RuvA and exits via RuvB. An RuvB hexamer assembles on each DNA strand where it exits the tetramer. Each RuvB hexamer is contacted by two RuvA subunits (via domain III) on 2 adjacent RuvB subunits; this complex drives branch migration. In the full resolvosome a probable DNA-RuvA(4)-RuvB(12)-RuvC(2) complex forms which resolves the HJ.

It localises to the cytoplasm. In terms of biological role, the RuvA-RuvB-RuvC complex processes Holliday junction (HJ) DNA during genetic recombination and DNA repair, while the RuvA-RuvB complex plays an important role in the rescue of blocked DNA replication forks via replication fork reversal (RFR). RuvA specifically binds to HJ cruciform DNA, conferring on it an open structure. The RuvB hexamer acts as an ATP-dependent pump, pulling dsDNA into and through the RuvAB complex. HJ branch migration allows RuvC to scan DNA until it finds its consensus sequence, where it cleaves and resolves the cruciform DNA. This chain is Holliday junction branch migration complex subunit RuvA, found in Paraburkholderia phytofirmans (strain DSM 17436 / LMG 22146 / PsJN) (Burkholderia phytofirmans).